Here is a 264-residue protein sequence, read N- to C-terminus: Undecaprenyl-diphosphatase (264 aa).

8 helical membrane-spanning segments follow: residues 7-27 (IVLA…SAHL), 41-61 (LIFD…YYQA), 89-109 (VLLG…FVAV), 114-134 (IEII…ASWF), 144-164 (TISW…LIPG), 186-206 (IQFS…LMLI), 219-239 (LLVL…IFVI), and 244-264 (MVGM…LFFL).

The protein belongs to the UppP family.

Its subcellular location is the cell inner membrane. It catalyses the reaction di-trans,octa-cis-undecaprenyl diphosphate + H2O = di-trans,octa-cis-undecaprenyl phosphate + phosphate + H(+). Catalyzes the dephosphorylation of undecaprenyl diphosphate (UPP). Confers resistance to bacitracin. This chain is Undecaprenyl-diphosphatase, found in Vesicomyosocius okutanii subsp. Calyptogena okutanii (strain HA).